We begin with the raw amino-acid sequence, 66 residues long: Large ribosomal subunit protein bL35 (66 aa).

It belongs to the bacterial ribosomal protein bL35 family.

This chain is Large ribosomal subunit protein bL35, found in Caulobacter sp. (strain K31).